A 320-amino-acid chain; its full sequence is ATP-dependent 6-phosphofructokinase (320 aa).

ATP is bound at residue Gly-12. ADP-binding positions include Arg-22–Arg-26 and Arg-55–Asp-60. ATP-binding positions include Arg-73–Phe-74 and Gly-103–Ser-106. Asp-104 contributes to the Mg(2+) binding site. Thr-126–Asp-128 is a binding site for substrate. The Proton acceptor role is filled by Asp-128. Position 155 (Arg-155) interacts with ADP. Substrate contacts are provided by residues Arg-163 and Met-170 to Arg-172. Residues Gly-186–Glu-188, Lys-212, and Lys-214–His-216 each bind ADP. Substrate contacts are provided by residues Glu-223, Arg-244, and His-250–Arg-253.

The protein belongs to the phosphofructokinase type A (PFKA) family. ATP-dependent PFK group I subfamily. Prokaryotic clade 'B1' sub-subfamily. Homotetramer. Mg(2+) serves as cofactor.

It is found in the cytoplasm. It catalyses the reaction beta-D-fructose 6-phosphate + ATP = beta-D-fructose 1,6-bisphosphate + ADP + H(+). The protein operates within carbohydrate degradation; glycolysis; D-glyceraldehyde 3-phosphate and glycerone phosphate from D-glucose: step 3/4. Its activity is regulated as follows. Allosterically activated by ADP and other diphosphonucleosides, and allosterically inhibited by phosphoenolpyruvate. Catalyzes the phosphorylation of D-fructose 6-phosphate to fructose 1,6-bisphosphate by ATP, the first committing step of glycolysis. The polypeptide is ATP-dependent 6-phosphofructokinase (Pectobacterium carotovorum subsp. carotovorum (strain PC1)).